Consider the following 169-residue polypeptide: NAD(P)H-quinone oxidoreductase subunit J, chloroplastic (169 aa).

Belongs to the complex I 30 kDa subunit family. As to quaternary structure, NDH is composed of at least 16 different subunits, 5 of which are encoded in the nucleus.

It localises to the plastid. The protein localises to the chloroplast thylakoid membrane. The catalysed reaction is a plastoquinone + NADH + (n+1) H(+)(in) = a plastoquinol + NAD(+) + n H(+)(out). It catalyses the reaction a plastoquinone + NADPH + (n+1) H(+)(in) = a plastoquinol + NADP(+) + n H(+)(out). Functionally, NDH shuttles electrons from NAD(P)H:plastoquinone, via FMN and iron-sulfur (Fe-S) centers, to quinones in the photosynthetic chain and possibly in a chloroplast respiratory chain. The immediate electron acceptor for the enzyme in this species is believed to be plastoquinone. Couples the redox reaction to proton translocation, and thus conserves the redox energy in a proton gradient. The sequence is that of NAD(P)H-quinone oxidoreductase subunit J, chloroplastic from Anthoceros angustus (Hornwort).